We begin with the raw amino-acid sequence, 160 residues long: SsrA-binding protein (160 aa).

This sequence belongs to the SmpB family.

Its subcellular location is the cytoplasm. Required for rescue of stalled ribosomes mediated by trans-translation. Binds to transfer-messenger RNA (tmRNA), required for stable association of tmRNA with ribosomes. tmRNA and SmpB together mimic tRNA shape, replacing the anticodon stem-loop with SmpB. tmRNA is encoded by the ssrA gene; the 2 termini fold to resemble tRNA(Ala) and it encodes a 'tag peptide', a short internal open reading frame. During trans-translation Ala-aminoacylated tmRNA acts like a tRNA, entering the A-site of stalled ribosomes, displacing the stalled mRNA. The ribosome then switches to translate the ORF on the tmRNA; the nascent peptide is terminated with the 'tag peptide' encoded by the tmRNA and targeted for degradation. The ribosome is freed to recommence translation, which seems to be the essential function of trans-translation. This Histophilus somni (strain 129Pt) (Haemophilus somnus) protein is SsrA-binding protein.